Consider the following 787-residue polypeptide: Serine/threonine-protein kinase PLK4 (787 aa).

Residues 14–268 (YEVQHLLGKG…LEQVLRHPFM (255 aa)) form the Protein kinase domain. ATP is bound by residues 20–28 (LGKGGFASV) and Lys-43. The Proton acceptor role is filled by Asp-139. Residues 311–336 (SNESRSSQRLRSIEKSAQSSSNPQML) are disordered. The Cryptic POLO box 1 (CPB1) domain occupies 386-505 (EQQMRVPPLN…ARFVGLVKSK (120 aa)). In terms of domain architecture, Cryptic POLO box 2 (CPB2) spans 506-613 (TPKITYFSSL…GRRPLTDVSH (108 aa)). The 81-residue stretch at 675–755 (PIKRINIPDV…IPQVKLRLKC (81 aa)) folds into the POLO box domain.

This sequence belongs to the protein kinase superfamily. Ser/Thr protein kinase family. CDC5/Polo subfamily. In terms of assembly, homodimer. Post-translationally, ubiquitinated by the SCF(Slimb) ubiquitin ligase complex; leading to its degradation by the proteasome during interphase and regulating centriole number and ensuring the block to centriole reduplication.

The protein localises to the cytoplasm. It is found in the cytoskeleton. Its subcellular location is the microtubule organizing center. It localises to the centrosome. The protein resides in the centriole. The enzyme catalyses L-seryl-[protein] + ATP = O-phospho-L-seryl-[protein] + ADP + H(+). The catalysed reaction is L-threonyl-[protein] + ATP = O-phospho-L-threonyl-[protein] + ADP + H(+). In terms of biological role, serine/threonine-protein kinase that plays a central role in centriole duplication. Able to trigger procentriole formation on the surface of the mother centriole cylinder, using mother centriole as a platform, leading to the recruitment of centriole biogenesis proteins such as sas-6. When overexpressed, it is able to induce centrosome amplification through the simultaneous generation of multiple procentrioles adjoining each parental centriole during S phase. Centrosome amplification following overexpression can initiate tumorigenesis, highlighting the importance of centrosome regulation in cancers. The polypeptide is Serine/threonine-protein kinase PLK4 (SAK) (Drosophila willistoni (Fruit fly)).